A 489-amino-acid polypeptide reads, in one-letter code: Inositol-pentakisphosphate 2-kinase (489 aa).

The EXKPK motif signature appears at 136 to 140 (EIKPK).

Belongs to the IPK1 type 2 family.

Its subcellular location is the cytoplasm. The protein resides in the nucleus. It catalyses the reaction 1D-myo-inositol 1,3,4,5,6-pentakisphosphate + ATP = 1D-myo-inositol hexakisphosphate + ADP + H(+). Functionally, phosphorylates Ins(1,3,4,5,6)P5 at position 2 to form Ins(1,2,3,4,5,6)P6 (InsP6 or phytate). InsP6 is involved in many processes such as mRNA export, non-homologous end-joining, endocytosis, ion channel regulation. It also protects cells from TNF-alpha-induced apoptosis. This chain is Inositol-pentakisphosphate 2-kinase (Ippk), found in Rattus norvegicus (Rat).